We begin with the raw amino-acid sequence, 267 residues long: Glutamate 5-kinase (267 aa).

Position 17 (K17) interacts with ATP. Residues S57, D144, and N156 each contribute to the substrate site. Residues 176-177 (SD) and 218-224 (TGGMATK) contribute to the ATP site.

The protein belongs to the glutamate 5-kinase family.

It is found in the cytoplasm. The catalysed reaction is L-glutamate + ATP = L-glutamyl 5-phosphate + ADP. Its pathway is amino-acid biosynthesis; L-proline biosynthesis; L-glutamate 5-semialdehyde from L-glutamate: step 1/2. In terms of biological role, catalyzes the transfer of a phosphate group to glutamate to form L-glutamate 5-phosphate. This is Glutamate 5-kinase from Clostridium acetobutylicum (strain ATCC 824 / DSM 792 / JCM 1419 / IAM 19013 / LMG 5710 / NBRC 13948 / NRRL B-527 / VKM B-1787 / 2291 / W).